The primary structure comprises 313 residues: Small ribosomal subunit protein uS2 (313 aa).

An N-acetylserine modification is found at Ser2. Laminin-binding stretches follow at residues 161–180 and 205–229; these read IPCN…MLAR and RDPE…EFQG. [DE]-W-[ST] repeat units lie at residues 230 to 232 and 245 to 247; these read EWS and DWS. Residues 242 to 313 form a laminin-binding region; it reads EVADWSEGVA…DWGGTTSDWS (72 aa). Residues 262–274 are compositionally biased toward low complexity; that stretch reads PATAAAAAAAAPP. The tract at residues 262 to 313 is disordered; that stretch reads PATAAAAAAAAPPVKTGEVFSEDWSTQPATDDWSTAPTAQASDWGGTTSDWS. [DE]-W-[ST] repeat units follow at residues 284 to 286, 293 to 295, and 311 to 313; these read DWS. Residues 284-313 show a composition bias toward polar residues; it reads DWSTQPATDDWSTAPTAQASDWGGTTSDWS.

Belongs to the universal ribosomal protein uS2 family. As to quaternary structure, monomer (37LRP) and homodimer (67LR). Component of the small ribosomal subunit. Mature ribosomes consist of a small (40S) and a large (60S) subunit. The 40S subunit contains about 33 different proteins and 1 molecule of RNA (18S). The 60S subunit contains about 49 different proteins and 3 molecules of RNA (28S, 5.8S and 5S). Interacts with rps21. Interacts with several laminins including at least lamb1. Interacts with mdk. Post-translationally, acylated. Acylation may be a prerequisite for conversion of the monomeric 37 kDa laminin receptor precursor (37LRP) to the mature dimeric 67 kDa laminin receptor (67LR), and may provide a mechanism for membrane association. In terms of processing, cleaved by stromelysin-3 (ST3) at the cell surface. Cleavage by stromelysin-3 may be a mechanism to alter cell-extracellular matrix interactions.

The protein localises to the cell membrane. It localises to the cytoplasm. Its subcellular location is the nucleus. Its function is as follows. Required for the assembly and/or stability of the 40S ribosomal subunit. Required for the processing of the 20S rRNA-precursor to mature 18S rRNA in a late step of the maturation of 40S ribosomal subunits. Also functions as a cell surface receptor for laminin. Plays a role in cell adhesion to the basement membrane and in the consequent activation of signaling transduction pathways. May play a role in cell fate determination and tissue morphogenesis. In Solea senegalensis (Senegalese sole), this protein is Small ribosomal subunit protein uS2 (rpsa).